The sequence spans 188 residues: MMGNDSYSSNRGSSRDVLSFLQNFLGGFYAKYGIEVKLVGGLSLSKFYYAFDAERNQFLARHFLPVLSYIKKDFNARAALGIVNVDIYEPGFNFIFGLAHPGLKVAVVSLYRLYPEFYGNPPDRKLLKERALKEVMHELGHVFGLGHCPNPKCVMHFSNSIIDTDIKSWMYCESCLRKLEKNLARSHV.

H137 lines the Zn(2+) pocket. Catalysis depends on E138, which acts as the Proton acceptor. Zn(2+) contacts are provided by H141, H147, C148, C153, C172, and C175.

It belongs to the peptidase M54 family. In terms of assembly, monomer. Zn(2+) is required as a cofactor.

Its function is as follows. Probable zinc metalloprotease whose natural substrate is unknown. This Pyrococcus horikoshii (strain ATCC 700860 / DSM 12428 / JCM 9974 / NBRC 100139 / OT-3) protein is Archaemetzincin.